We begin with the raw amino-acid sequence, 516 residues long: Tyrosine decarboxylase 3 (516 aa).

At Lys-319 the chain carries N6-(pyridoxal phosphate)lysine.

The protein belongs to the group II decarboxylase family. As to quaternary structure, homodimer. Pyridoxal 5'-phosphate serves as cofactor.

It catalyses the reaction L-tyrosine + H(+) = tyramine + CO2. This chain is Tyrosine decarboxylase 3 (TYRDC-3), found in Petroselinum crispum (Parsley).